The primary structure comprises 144 residues: Gastric inhibitory polypeptide (144 aa).

The N-terminal stretch at 1 to 21 (MVALKTCSLLLVLLFLAVGLG) is a signal peptide. Propeptides lie at residues 22 to 42 (EKEE…PRGP) and 87 to 144 (EARA…LRSQ). The interval 94-113 (AGQSQGKEDKEAQESSLPKS) is disordered.

The protein belongs to the glucagon family.

Its subcellular location is the secreted. Functionally, potent stimulator of insulin secretion and relatively poor inhibitor of gastric acid secretion. This Mus musculus (Mouse) protein is Gastric inhibitory polypeptide (Gip).